The chain runs to 319 residues: Acetyl-coenzyme A carboxylase carboxyl transferase subunit alpha (319 aa).

Positions 35 to 296 (NLDEEVQRLR…KAQLLDDLSE (262 aa)) constitute a CoA carboxyltransferase C-terminal domain.

This sequence belongs to the AccA family. As to quaternary structure, acetyl-CoA carboxylase is a heterohexamer composed of biotin carboxyl carrier protein (AccB), biotin carboxylase (AccC) and two subunits each of ACCase subunit alpha (AccA) and ACCase subunit beta (AccD).

The protein localises to the cytoplasm. It catalyses the reaction N(6)-carboxybiotinyl-L-lysyl-[protein] + acetyl-CoA = N(6)-biotinyl-L-lysyl-[protein] + malonyl-CoA. It functions in the pathway lipid metabolism; malonyl-CoA biosynthesis; malonyl-CoA from acetyl-CoA: step 1/1. In terms of biological role, component of the acetyl coenzyme A carboxylase (ACC) complex. First, biotin carboxylase catalyzes the carboxylation of biotin on its carrier protein (BCCP) and then the CO(2) group is transferred by the carboxyltransferase to acetyl-CoA to form malonyl-CoA. This is Acetyl-coenzyme A carboxylase carboxyl transferase subunit alpha from Sodalis glossinidius (strain morsitans).